The following is a 498-amino-acid chain: NADH-quinone oxidoreductase subunit N 2 (498 aa).

14 consecutive transmembrane segments (helical) span residues 19-39 (VATQ…IALF), 47-67 (IVGY…IPLW), 83-103 (YSLT…VLSL), 114-134 (SEYY…AQGA), 136-156 (LIIL…LTGF), 171-191 (LLIG…LYGA), 215-235 (IYLL…VAMA), 249-269 (PTPI…AALL), 282-302 (IWAP…NIGA), 317-337 (IGHA…GGIA), 345-365 (VLLY…VLIA), 389-409 (LAVA…TGGF), 420-440 (WLSG…IAAF), and 468-488 (AGLA…TPAI).

It belongs to the complex I subunit 2 family. NDH-1 is composed of 14 different subunits. Subunits NuoA, H, J, K, L, M, N constitute the membrane sector of the complex.

The protein resides in the cell membrane. It carries out the reaction a quinone + NADH + 5 H(+)(in) = a quinol + NAD(+) + 4 H(+)(out). In terms of biological role, NDH-1 shuttles electrons from NADH, via FMN and iron-sulfur (Fe-S) centers, to quinones in the respiratory chain. The immediate electron acceptor for the enzyme in this species is believed to be ubiquinone. Couples the redox reaction to proton translocation (for every two electrons transferred, four hydrogen ions are translocated across the cytoplasmic membrane), and thus conserves the redox energy in a proton gradient. The polypeptide is NADH-quinone oxidoreductase subunit N 2 (Roseiflexus castenholzii (strain DSM 13941 / HLO8)).